The chain runs to 209 residues: MIVTIDGVAASGKSSVASGVARALGVPYVSSGLLYRAATLLALEADLPLDDPTTLLPQLHAHPLRLEALPEGNRVWAGERELTAELHSTRVDQGVSAVAALPEVRAWVDAQLRALPAPFVAEGRDMGTHVFPHADAKFYLTASPRVRAERRAQERPEDVPTIEAALIERDRRDRLQSAPAPDAHVIDTGPLALEDVIGVILAALPARSA.

7-15 (GVAASGKSS) is a binding site for ATP.

It belongs to the cytidylate kinase family. Type 1 subfamily.

The protein localises to the cytoplasm. It catalyses the reaction CMP + ATP = CDP + ADP. The catalysed reaction is dCMP + ATP = dCDP + ADP. This chain is Cytidylate kinase, found in Deinococcus geothermalis (strain DSM 11300 / CIP 105573 / AG-3a).